The following is a 5654-amino-acid chain: MSVGRRKLALLWALALALACTRHTGHAQDGSSESSYKHHPALSPIARGPSGVPLRGATVFPSLRTIPVVRASNPAHNGRVCSTWGSFHYKTFDGDVFRFPGLCNYVFSEHCGAAYEDFNIQLRRSQESAAPTLSRVLMKVDGVVIQLTKGSVLVNGHPVLLPFSQSGVLIQQSSSYTKVEARLGLVLMWNHDDSLLLELDTKYANKTCGLCGDFNGMPVVSELLSHNTKLTPMEFGNLQKMDDPTDQCQDPVPEPPRNCSTGFGICEELLHGQLFSGCVALVDVGSYLEACRQDLCFCEDTDLLSCVCHTLAEYSRQCTHAGGLPQDWRGPDFCPQKCPNNMQYHECRSPCADTCSNQEHSRACEDHCVAGCFCPEGTVLDDIGQTGCVPVSKCACVYNGAAYAPGATYSTDCTNCTCSGGRWSCQEVPCPGTCSVLGGAHFSTFDGKQYTVHGDCSYVLTKPCDSSAFTVLAELRRCGLTDSETCLKSVTLSLDGAQTVVVIKASGEVFLNQIYTQLPISAANVTIFRPSTFFIIAQTSLGLQLNLQLVPTMQLFMQLAPKLRGQTCGLCGNFNSIQADDFRTLSGVVEATAAAFFNTFKTQAACPNIRNSFEDPCSLSVENEKYAQHWCSQLTDADGPFGRCHAAVKPGTYYSNCMFDTCNCERSEDCLCAALSSYVHACAAKGVQLGGWRDGVCTKPMTTCPKSMTYHYHVSTCQPTCRSLSEGDITCSVGFIPVDGCICPKGTFLDDTGKCVQASNCPCYHRGSMIPNGESVHDSGAICTCTHGKLSCIGGQAPAPVCAAPMVFFDCRNATPGDTGAGCQKSCHTLDMTCYSPQCVPGCVCPDGLVADGEGGCITAEDCPCVHNEASYRAGQTIRVGCNTCTCDSRMWRCTDDPCLATCAVYGDGHYLTFDGQSYSFNGDCEYTLVQNHCGGKDSTQDSFRVVTENVPCGTTGTTCSKAIKIFLGGFELKLSHGKVEVIGTDESQEVPYTIRQMGIYLVVDTDIGLVLLWDKKTSIFINLSPEFKGRVCGLCGNFDDIAVNDFATRSRSVVGDVLEFGNSWKLSPSCPDALAPKDPCTANPFRKSWAQKQCSILHGPTFAACHAHVEPARYYEACVNDACACDSGGDCECFCTAVAAYAQACHEVGLCVSWRTPSICPLFCDYYNPEGQCEWHYQPCGVPCLRTCRNPRGDCLRDVRGLEGCYPKCPPEAPIFDEDKMQCVATCPTPPLPPRCHVHGKSYRPGAVVPSDKNCQSCLCTERGVECTYKAEACVCTYNGQRFHPGDVIYHTTDGTGGCISARCGANGTIERRVYPCSPTTPVPPTTFSFSTPPLVVSSTHTPSNGPSSAHTGPPSSAWPTTAGTSPRTRLPTASASLPPVCGEKCLWSPWMDVSRPGRGTDSGDFDTLENLRAHGYRVCESPRSVECRAEDAPGVPLRALGQRVQCSPDVGLTCRNREQASGLCYNYQIRVQCCTPLPCSTSSSPAQTTPPTTSKTTETRASGSSAPSSTPGTVSLSTARTTPAPGTATSVKKTFSTPSPPPVPATSTSSMSTTAPGTSVVSSKPTPTEPSTSSCLQELCTWTEWIDGSYPAPGINGGDFDTFQNLRDEGYTFCESPRSVQCRAESFPNTPLADLGQDVICSHTEGLICLNKNQLPPICYNYEIRIQCCETVNVCRDITRLPKTVATTRPTPHPTGAQTQTTFTTHMPSASTEQPTATSRGGPTATSVTQGTHTTLVTRNCHPRCTWTKWFDVDFPSPGPHGGDKETYNNIIRSGEKICRRPEEITRLQCRAKSHPEVSIEHLGQVVQCSREEGLVCRNQDQQGPFKMCLNYEVRVLCCETPRGCHMTSTPGSTSSSPAQTTPSTTSKTTETQASGSSAPSSTPGTVSLSTARTTPAPGTATSVKKTFSTPSPPPVPATSTSSMSTTAPGTSVVSSKPTPTEPSTSSCLQELCTWTEWIDGSYPAPGINGGDFDTFQNLRDEGYTFCESPRSVQCRAESFPNTPLADLGQDVICSHTEGLICLNKNQLPPICYNYEIRIQCCETVNVCRDITRPPKTVATTRPTPHPTGAQTQTTFTTHMPSASTEQPTATSRGGPTATSVTQGTHTTPVTRNCHPRCTWTTWFDVDFPSPGPHGGDKETYNNIIRSGEKICRRPEEITRLQCRAKSHPEVSIEHLGQVVQCSREEGLVCRNQDQQGPFKMCLNYEVRVLCCETPKGCPVTSTPVTAPSTPSGRATSPTQSTSSWQKSRTTTLVTTSTTSTPQTSTTYAHTTSTTSAPTARTTSAPTTRTTSASPASTTSGPGNTPSPVPTTSTISAPTTSITSAPTTSTTSAPTSSTTSGPGTTPSPVPTTSITSAPTTSTTSAPTTSTTSARTSSTTSATTTSRISGPETTPSPVPTTSTTSATTTSTTSAPTTSTTSAPTSSTTSSPQTSTTSAPTTSTTSGPGTTPSPVPTTSTTSAPTTRTTSAPKSSTTSAATTSTTSGPETTPRPVPTTSTTSSPTTSTTSAPTTSTTSASTTSTTSGAGTTPSPVPTTSTTSAPTTSTTSAPISSTTSATTTSTTSGPGTTPSPVPTTSTTSAPTTSTTSGPGTTPSAVPTTSITSAPTTSTNSAPISSTTSATTTSRISGPETTPSPVPTASTTSASTTSTTSGPGTTPSPVPTTSTISVPTTSTTSASTTSTTSASTTSTTSGPGTTPSPVPTTSTTSAPTTSTTSAPTTSTISAPTTSTTSATTTSTTSAPTPRRTSAPTTSTISASTTSTTSATTTSTTSATTTSTISAPTTSTTLSPTTSTTSTTITSTTSAPISSTTSTPQTSTTSAPTTSTTSGPGTTSSPVPTTSTTSAPTTSTTSAPTTRTTSVPTSSTTSTATTSTTSGPGTTPSPVPTTSTTSAPTTRTTSAPTTSTTSAPTTSTTSAPTSSTTSATTTSTISVPTTSTTSVPGTTPSPVPTTSTISVPTTSTTSASTTSTTSGPGTTPSPVPTTSTTSAPTTSTTSAPTTSTISAPTTSTPSAPTTSTTLAPTTSTTSAPTTSTTSTPTSSTTSSPQTSTTSASTTSITSGPGTTPSPVPTTSTTSAPTTSTTSAATTSTISAPTTSTTSAPTTSTTSASTASKTSGLGTTPSPIPTTSTTSPPTTSTTSASTASKTSGPGTTPSPVPTTSTIFAPRTSTTSASTTSTTPGPGTTPSPVPTTSTASVSKTSTSHVSISKTTHSQPVTRDCHLRCTWTKWFDIDFPSPGPHGGDKETYNNIIRSGEKICRRPEEITRLQCRAESHPEVSIEHLGQVVQCSREEGLVCRNQDQQGPFKMCLNYEVRVLCCETPKGCPVTSTPVTAPSTPSGRATSPTQSTSSWQKSRTTTLVTTSTTSTPQTSTTSAPTTSTTSAPTTSTTSAPTTSTTSTPQTSISSAPTSSTTSAPTSSTISARTTSIISAPTTSTTSSPTTSTTSATTTSTTSAPTSSTTSTPQTSKTSAATSSTTSGSGTTPSPVTTTSTASVSKTSTSHVSVSKTTHSQPVTRDCHPRCTWTKWFDVDFPSPGPHGGDKETYNNIIRSGEKICRRPEEITRLQCRAKSHPEVSIEHLGQVVQCSREEGLVCRNQDQQGPFKMCLNYEVRVLCCETPKGCPVTSTSVTAPSTPSGRATSPTQSTSSWQKSRTTTLVTSSITSTTQTSTTSAPTTSTTPASIPSTTSAPTTSTTSAPTTSTTSAPTTSTTSTPQTTTSSAPTSSTTSAPTTSTISAPTTSTISAPTTSTTSAPTASTTSAPTSTSSAPTTNTTSAPTTSTTSAPITSTISAPTTSTTSTPQTSTISSPTTSTTSTPQTSTTSSPTTSTTSAPTTSTTSAPTTSTTSTPQTSISSAPTSSTTSAPTASTISAPTTSTTSFHTTSTTSPPTSSTSSTPQTSKTSAATSSTTSGSGTTPSPVPTTSTASVSKTSTSHVSVSKTTHSQPVTRDCHPRCTWTKWFDVDFPSPGPHGGDKETYNNIIRSGEKICRRPEEITRLQCRAESHPEVSIEHLGQVVQCSREEGLVCRNQDQQGPFKMCLNYEVRVLCCETPKGCPVTSTPVTAPSTPSGRATSPTQSTSSWQKSRTTTLVTTSTTSTPQTSTTSAPTTSTIPASTPSTTSAPTTSTTSAPTTSTTSAPTHRTTSGPTTSTTLAPTTSTTSAPTTSTNSAPTTSTISASTTSTISAPTTSTISSPTSSTTSTPQTSKTSAATSSTTSGSGTTPSPVPTTSTTSASTTSTTSAPTTSTTSGPGTTPSPVPSTSTTSAATTSTTSAPTTRTTSAPTSSMTSGPGTTPSPVPTTSTTSAPTTSTTSGPGTTPSPVPTTSTTSAPITSTTSGPGSTPSPVPTTSTTSAPTTSTTSASTASTTSGPGTTPSPVPTTSTTSAPTTRTTSASTASTTSGPGSTPSPVPTTSTTSAPTTRTTPASTASTTSGPGTTPSPVPTTSTTSASTTSTISLPTTSTTSAPITSMTSGPGTTPSPVPTTSTTSAPTTSTTSASTASTTSGPGTTPSPVPTTSTTSAPTTSTTSASTASTTSGPGTSLSPVPTTSTTSAPTTSTTSGPGTTPSPVPTTSTTSAPTTSTTSGPGTTPSPVPTTSTTPVSKTSTSHLSVSKTTHSQPVTSDCHPLCAWTKWFDVDFPSPGPHGGDKETYNNIIRSGEKICRRPEEITRLQCRAESHPEVNIEHLGQVVQCSREEGLVCRNQDQQGPFKMCLNYEVRVLCCETPRGCPVTSVTPYGTSPTNALYPSLSTSMVSASVASTSVASSSVASSSVAYSTQTCFCNVADRLYPAGSTIYRHRDLAGHCYYALCSQDCQVVRGVDSDCPSTTLPPAPATSPSISTSEPVTELGCPNAVPPRKKGETWATPNCSEATCEGNNVISLRPRTCPRVEKPTCANGYPAVKVADQDGCCHHYQCQCVCSGWGDPHYITFDGTYYTFLDNCTYVLVQQIVPVYGHFRVLVDNYFCGAEDGLSCPRSIILEYHQDRVVLTRKPVHGVMTNEIIFNNKVVSPGFRKNGIVVSRIGVKMYATIPELGVQVMFSGLIFSVEVPFSKFANNTEGQCGTCTNDRKDECRTPRGTVVASCSEMSGLWNVSIPDQPACHRPHPTPTTVGPTTVGSTTVGPTTVGSTTVGPTTPPAPCLPSPICQLILSKVFEPCHTVIPPLLFYEGCVFDRCHMTDLDVVCSSLELYAALCASHDICIDWRGRTGHMCPFTCPADKVYQPCGPSNPSYCYGNDSASLGALPEAGPITEGCFCPEGMTLFSTSAQVCVPTGCPRCLGPHGEPVKVGHTVGMDCQECTCEAATWTLTCRPKLCPLPPACPLPGFVPVPAAPQAGQCCPQYSCACNTSRCPAPVGCPEGARAIPTYQEGACCPVQNCSWTVCSINGTLYQPGAVVSSSLCETCRCELPGGPPSDAFVVSCETQICNTHCPVGFEYQEQSGQCCGTCVQVACVTNTSKSPAHLFYPGETWSDAGNHCVTHQCEKHQDGLVVVTTKKACPPLSCSLDEARMSKDGCCRFCPPPPPPYQNQSTCAVYHRSLIIQQQGCSSSEPVRLAYCRGNCGDSSSMYSLEGNTVEHRCQCCQELRTSLRNVTLHCTDGSSRAFSYTEVEECGCMGRRCPAPGDTQHSEEAEPEPSQEAESGSWERGVPVSPMH.

The first 27 residues, 1–27 (MSVGRRKLALLWALALALACTRHTGHA), serve as a signal peptide directing secretion. The segment at 27 to 49 (AQDGSSESSYKHHPALSPIARGP) is disordered. The region spanning 79-249 (RVCSTWGSFH…KMDDPTDQCQ (171 aa)) is the VWFD 1 domain. 2 disulfide bridges follow: Cys-81–Cys-211 and Cys-103–Cys-248. Glu-198 is a binding site for Cu(2+). 2 N-linked (GlcNAc...) asparagine glycosylation sites follow: Asn-205 and Asn-258. The Cu(2+) site is built by His-320 and His-367. The TIL 1 domain maps to 338–394 (CPNNMQYHECRSPCADTCSNQEHSRACEDHCVAGCFCPEGTVLDDIGQTGCVPVSKC). Residues 394–465 (CACVYNGAAY…CSYVLTKPCD (72 aa)) enclose the VWFC 1 domain. A glycan (N-linked (GlcNAc...) asparagine) is linked at Asn-415. The VWFD 2 domain occupies 432 to 607 (GTCSVLGGAH…NTFKTQAACP (176 aa)). Disulfide bonds link Cys-434–Cys-571, Cys-456–Cys-606, and Cys-478–Cys-486. A glycan (N-linked (GlcNAc...) asparagine) is linked at Asn-524. TIL domains follow at residues 704–761 (CPKS…ASNC) and 818–863 (DTGA…AEDC). The 172-residue stretch at 901–1072 (ATCAVYGDGH…NSWKLSPSCP (172 aa)) folds into the VWFD 3 domain. 4 disulfides stabilise this stretch: Cys-903-Cys-1036, Cys-925-Cys-1071, Cys-934-Cys-1033, and Cys-953-Cys-960. Asn-1308 carries an N-linked (GlcNAc...) asparagine glycan. The tract at residues 1336–1377 (LVVSSTHTPSNGPSSAHTGPPSSAWPTTAGTSPRTRLPTASA) is disordered. Residues 1338–1377 (VSSTHTPSNGPSSAHTGPPSSAWPTTAGTSPRTRLPTASA) show a composition bias toward polar residues. The Cys-rich subdomain 1 repeat unit spans residues 1383-1481 (CGEKCLWSPW…RVQCCTPLPC (99 aa)). The segment at 1383–4731 (CGEKCLWSPW…VLCCETPRGC (3349 aa)) is 9 X Cys-rich subdomain repeats. Residue Trp-1389 is glycosylated (C-linked (Man) tryptophan). Low complexity-rich tracts occupy residues 1483 to 1539 (TSSS…TFST) and 1547 to 1575 (ATST…PSTS). The disordered stretch occupies residues 1483–1575 (TSSSPAQTTP…KPTPTEPSTS (93 aa)). One copy of the Cys-rich subdomain 2 repeat lies at 1577 to 1677 (CLQELCTWTE…IQCCETVNVC (101 aa)). C-linked (Man) tryptophan glycosylation is present at Trp-1584. Positions 1688 to 1733 (ATTRPTPHPTGAQTQTTFTTHMPSASTEQPTATSRGGPTATSVTQG) are disordered. The segment covering 1697 to 1707 (TGAQTQTTFTT) has biased composition (low complexity). Polar residues predominate over residues 1708-1733 (HMPSASTEQPTATSRGGPTATSVTQG). The stretch at 1743–1847 (CHPRCTWTKW…VLCCETPRGC (105 aa)) is one Cys-rich subdomain 3 repeat. The C-linked (Man) tryptophan glycan is linked to Trp-1749. The interval 1849-1948 (MTSTPGSTSS…KPTPTEPSTS (100 aa)) is disordered. 2 stretches are compositionally biased toward low complexity: residues 1850–1912 (TSTP…TFST) and 1920–1948 (ATST…PSTS). The stretch at 1950 to 2050 (CLQELCTWTE…IQCCETVNVC (101 aa)) is one Cys-rich subdomain 4 repeat. Trp-1957 carries C-linked (Man) tryptophan glycosylation. Positions 2059–2110 (TVATTRPTPHPTGAQTQTTFTTHMPSASTEQPTATSRGGPTATSVTQGTHTT) are disordered. Residues 2070 to 2080 (TGAQTQTTFTT) are compositionally biased toward low complexity. Positions 2081 to 2110 (HMPSASTEQPTATSRGGPTATSVTQGTHTT) are enriched in polar residues. One copy of the Cys-rich subdomain 5 repeat lies at 2116–2220 (CHPRCTWTTW…VLCCETPKGC (105 aa)). A glycan (C-linked (Man) tryptophan) is linked at Trp-2122. A compositionally biased stretch (low complexity) spans 2224-2234 (STPVTAPSTPS). The segment at 2224-3214 (STPVTAPSTP…SHVSISKTTH (991 aa)) is disordered. Over residues 2235–2249 (GRATSPTQSTSSWQK) the composition is skewed to polar residues. Composition is skewed to low complexity over residues 2250–3184 (SRTT…TPGP) and 3192–3214 (PTTS…KTTH). Residues 2257–3200 (TTSTTSTPQT…VPTTSTASVS (944 aa)) form a 107 X 8 AA approximate tandem repeats of T-T-S-T-T-S-A-P region. Thr-2395, Thr-2405, Thr-2451, Thr-2461, Thr-2531, Thr-2541, Thr-2571, Thr-2581, Thr-2699, Thr-2709, Thr-2883, Thr-2893, Thr-2979, Thr-2989, Thr-3067, and Thr-3077 each carry an O-linked (GalNAc) threonine glycan. The Cys-rich subdomain 6 repeat unit spans residues 3222-3326 (CHLRCTWTKW…VLCCETPKGC (105 aa)). A C-linked (Man) tryptophan glycan is attached at Trp-3228. The segment covering 3329–3340 (TSTPVTAPSTPS) has biased composition (low complexity). The interval 3329–3515 (TSTPVTAPST…SVSKTTHSQP (187 aa)) is disordered. Over residues 3341–3355 (GRATSPTQSTSSWQK) the composition is skewed to polar residues. Low complexity predominate over residues 3356–3513 (SRTTTLVTTS…HVSVSKTTHS (158 aa)). The interval 3363–3498 (TTSTTSTPQT…VTTTSTASVS (136 aa)) is 17 X 8 AA approximate tandem repeats of T-T-S-T-T-S-A-P. One copy of the Cys-rich subdomain 7 repeat lies at 3520–3660 (CHPRCTWTKW…WQKSRTTTLV (141 aa)). A C-linked (Man) tryptophan glycan is attached at Trp-3526. A compositionally biased stretch (low complexity) spans 3628–3638 (STSVTAPSTPS). Residues 3628–3951 (STSVTAPSTP…KTTHSQPVTR (324 aa)) form a disordered region. Polar residues predominate over residues 3639–3660 (GRATSPTQSTSSWQKSRTTTLV). The interval 3661–3931 (TSSITSTTQT…VPTTSTASVS (271 aa)) is 34 X 8 AA approximate tandem repeats of T-T-S-T-T-S-A-P. Residues 3661-3946 (TSSITSTTQT…HVSVSKTTHS (286 aa)) are compositionally biased toward low complexity. The N-linked (GlcNAc...) asparagine glycan is linked to Asn-3774. One copy of the Cys-rich subdomain 8 repeat lies at 3953–4057 (CHPRCTWTKW…VLCCETPKGC (105 aa)). Trp-3959 carries C-linked (Man) tryptophan glycosylation. Positions 4060-4071 (TSTPVTAPSTPS) are enriched in low complexity. Residues 4060–4625 (TSTPVTAPST…KTTHSQPVTS (566 aa)) form a disordered region. Over residues 4072–4088 (GRATSPTQSTSSWQKSR) the composition is skewed to polar residues. The segment covering 4089-4610 (TTTLVTTSTT…TTPVSKTSTS (522 aa)) has biased composition (low complexity). Positions 4093–4595 (VTTSTTSTPQ…TSGPGTTPSP (503 aa)) are 58 X 8 AA approximate tandem repeats of T-T-S-T-T-S-A-P. O-linked (GalNAc) threonine glycosylation is found at Thr-4224, Thr-4234, Thr-4296, Thr-4306, Thr-4320, Thr-4330, Thr-4376, Thr-4386, Thr-4440, Thr-4450, Thr-4480, Thr-4490, Thr-4512, Thr-4522, Thr-4568, and Thr-4578. Residues 4611-4624 (HLSVSKTTHSQPVT) are compositionally biased toward polar residues. The stretch at 4627 to 4731 (CHPLCAWTKW…VLCCETPRGC (105 aa)) is one Cys-rich subdomain 9 repeat. Trp-4633 carries C-linked (Man) tryptophan glycosylation. Residues 4830–4849 (TLPPAPATSPSISTSEPVTE) form a disordered region. Residues 4852–4918 (CPNAVPPRKK…DGCCHHYQCQ (67 aa)) enclose the VWFC 2 domain. N-linked (GlcNAc...) asparagine glycosylation is found at Asn-4869 and Asn-4942. The VWFD 4 domain occupies 4919 to 5103 (CVCSGWGDPH…VSIPDQPACH (185 aa)). 3 disulfides stabilise this stretch: Cys-4921/Cys-5063, Cys-4943/Cys-5102, and Cys-4967/Cys-4975. Residues Asn-5057, Asn-5093, and Asn-5236 are each glycosylated (N-linked (GlcNAc...) asparagine). The 70-residue stretch at 5276–5345 (PRCLGPHGEP…GQCCPQYSCA (70 aa)) folds into the VWFC 3 domain. Asn-5347, Asn-5377, Asn-5386, Asn-5455, and Asn-5528 each carry an N-linked (GlcNAc...) asparagine glycan. The VWFC 4 domain maps to 5381-5448 (TVCSINGTLY…QSGQCCGTCV (68 aa)). Cystine bridges form between Cys-5532–Cys-5582, Cys-5546–Cys-5596, Cys-5557–Cys-5612, and Cys-5561–Cys-5614. One can recognise a CTCK domain in the interval 5532 to 5620 (CAVYHRSLII…ECGCMGRRCP (89 aa)). Asn-5591 is a glycosylation site (N-linked (GlcNAc...) asparagine). Residues 5622–5654 (PGDTQHSEEAEPEPSQEAESGSWERGVPVSPMH) are disordered.

As to quaternary structure, homomultimer; disulfide-linked. The N- and C-terminus mediate their assembly into higher order structures to form filaments. The CTCK domains of two polypeptides associate in the endoplasmic reticulum to generate intermolecularly disulfide-bonded dimers. These dimers progress to the Golgi apparatus, which is a more acidic environment than the endoplasmic reticulum. Under acidic conditions, the N-termini form non-covalent intermolecular interactions that juxtapose assemblies from different CTCK-linked dimers to produce long, disulfide-linked polymers that remain highly compact until secretion. Post-translationally, C-, O- and N-glycosylated. O-glycosylated on the second and last Thr of the Thr-/Ser-rich tandem repeats TTPSPVPTTSTTSA. One form of glycosylation is also known as Lewis B (LeB) blood group antigen, a tetrasaccharide consisting of N-acetylglucosamine having a fucosyl residue attached. It has a role as an epitope and antigen and functions as a receptor for H.pylori binding and facilitates infection. C-mannosylation in the Cys-rich subdomains may be required for proper folding of these regions and for export from the endoplasmic reticulum during biosynthesis. Proteolytic cleavage in the C-terminal is initiated early in the secretory pathway and does not involve a serine protease. The extent of cleavage is increased in the acidic parts of the secretory pathway. Cleavage generates a reactive group which could link the protein to a primary amide. In terms of tissue distribution, highly expressed in surface mucosal cells of respiratory tract and stomach epithelia. Overexpressed in a number of carcinomas. Also expressed in Barrett's esophagus epithelium and in the proximal duodenum.

It is found in the secreted. Gel-forming glycoprotein of gastric and respiratory tract epithelia that protects the mucosa from infection and chemical damage by binding to inhaled microorganisms and particles that are subsequently removed by the mucociliary system. Interacts with H.pylori in the gastric epithelium, Barrett's esophagus as well as in gastric metaplasia of the duodenum (GMD). This Homo sapiens (Human) protein is Mucin-5AC.